The following is a 192-amino-acid chain: Thymidine kinase (192 aa).

ATP-binding positions include 9–16 (SAMNAGKS) and 87–90 (DECQ). The active-site Proton acceptor is Glu-88. Residues Cys-145, Cys-147, Cys-182, and His-185 each contribute to the Zn(2+) site.

Belongs to the thymidine kinase family. Homotetramer.

The protein resides in the cytoplasm. It catalyses the reaction thymidine + ATP = dTMP + ADP + H(+). The chain is Thymidine kinase from Vibrio vulnificus (strain CMCP6).